Reading from the N-terminus, the 435-residue chain is Exopolysaccharide production protein ExoQ (435 aa).

The next 10 helical transmembrane spans lie at 11–31, 35–55, 65–85, 117–137, 156–176, 178–198, 203–223, 230–250, 325–345, and 361–381; these read PGAN…VFAY, FGQV…LVDY, YLWI…SAAP, GMIA…TYHY, LGFY…VLGE, GLWM…LLTS, SVLT…ITAL, LLFI…IYAG, VVET…TAFF, and MVLF…IDIL.

It localises to the cell membrane. The protein operates within glycan metabolism; exopolysaccharide biosynthesis. Involved in the production of exopolysaccharide. The protein is Exopolysaccharide production protein ExoQ (exoQ) of Rhizobium meliloti (strain 1021) (Ensifer meliloti).